The sequence spans 120 residues: C-type natriuretic peptide 4 (120 aa).

The first 22 residues, 1–22, serve as a signal peptide directing secretion; it reads MNLSYLVACGLMITLLSVRMGA. A propeptide spanning residues 23-96 is cleaved from the precursor; it reads KPLSQAQQKS…PRRHKTGIKK (74 aa). The cysteines at positions 104 and 120 are disulfide-linked.

It belongs to the natriuretic peptide family.

It localises to the secreted. In terms of biological role, exhibits natriuretic and vasodepressant activity. Has cGMP-stimulating activity. May help to regulate body fluid homeostasis in a variety of aquatic environments. This chain is C-type natriuretic peptide 4, found in Takifugu rubripes (Japanese pufferfish).